The sequence spans 570 residues: Sulfite reductase [NADPH] hemoprotein beta-component (570 aa).

[4Fe-4S] cluster-binding residues include Cys-434, Cys-440, Cys-479, and Cys-483. Cys-483 serves as a coordination point for siroheme.

Belongs to the nitrite and sulfite reductase 4Fe-4S domain family. As to quaternary structure, alpha(8)-beta(8). The alpha component is a flavoprotein, the beta component is a hemoprotein. Requires siroheme as cofactor. The cofactor is [4Fe-4S] cluster.

It carries out the reaction hydrogen sulfide + 3 NADP(+) + 3 H2O = sulfite + 3 NADPH + 4 H(+). It functions in the pathway sulfur metabolism; hydrogen sulfide biosynthesis; hydrogen sulfide from sulfite (NADPH route): step 1/1. Its function is as follows. Component of the sulfite reductase complex that catalyzes the 6-electron reduction of sulfite to sulfide. This is one of several activities required for the biosynthesis of L-cysteine from sulfate. The protein is Sulfite reductase [NADPH] hemoprotein beta-component of Enterobacter sp. (strain 638).